The sequence spans 96 residues: Co-chaperonin GroES (96 aa).

Belongs to the GroES chaperonin family. As to quaternary structure, heptamer of 7 subunits arranged in a ring. Interacts with the chaperonin GroEL.

It is found in the cytoplasm. Its function is as follows. Together with the chaperonin GroEL, plays an essential role in assisting protein folding. The GroEL-GroES system forms a nano-cage that allows encapsulation of the non-native substrate proteins and provides a physical environment optimized to promote and accelerate protein folding. GroES binds to the apical surface of the GroEL ring, thereby capping the opening of the GroEL channel. The sequence is that of Co-chaperonin GroES from Nitrosomonas eutropha (strain DSM 101675 / C91 / Nm57).